Reading from the N-terminus, the 224-residue chain is NBPF family member NBPF6-like protein (224 aa).

Residues 159–224 form the Olduvai domain; the sequence is ENHHDRKDEE…ASVCDVQDQL (66 aa). The span at 198–209 shows a compositional bias: basic and acidic residues; that stretch reads YLTHSSHHDSHR. Positions 198–224 are disordered; it reads YLTHSSHHDSHRPPSSIASVCDVQDQL.

This sequence belongs to the NBPF family.

This Bos taurus (Bovine) protein is NBPF family member NBPF6-like protein.